Reading from the N-terminus, the 734-residue chain is Photosystem I P700 chlorophyll a apoprotein A2 (734 aa).

8 helical membrane-spanning segments follow: residues 46–69 (IFASHFGQLAIIFLWTSGNLFHVA), 135–158 (LYTGALFLLFLSAISLIAGWLHLQ), 175–199 (LNHHLSGLFGVSSLAWTGHLVHVAI), 273–291 (MAHHHLAIAFIFLVAGHMY), 330–353 (LHFQLGLALASLGVITSLVAQHMY), 369–395 (AALYTHHQYIAGFIMTGAFAHGAIFFI), 417–439 (AIISHLSWASLFLGFHTLGLYVH), and 517–535 (FLVHHAIALGLHTTTLILV). [4Fe-4S] cluster-binding residues include Cys559 and Cys568. 2 helical membrane-spanning segments follow: residues 575 to 596 (AFYLAVFWMLNTIGWVTFYWHW) and 643 to 665 (LSVWAWMFLFGHLVWATGFMFLI). Chlorophyll a-binding residues include His654, Met662, and Tyr670. Residue Trp671 participates in phylloquinone binding. Residues 707–727 (LVGLAHFSVGYIFTYAAFLIA) traverse the membrane as a helical segment.

Belongs to the PsaA/PsaB family. As to quaternary structure, the PsaA/B heterodimer binds the P700 chlorophyll special pair and subsequent electron acceptors. PSI consists of a core antenna complex that captures photons, and an electron transfer chain that converts photonic excitation into a charge separation. The eukaryotic PSI reaction center is composed of at least 11 subunits. P700 is a chlorophyll a/chlorophyll a' dimer, A0 is one or more chlorophyll a, A1 is one or both phylloquinones and FX is a shared 4Fe-4S iron-sulfur center. serves as cofactor.

Its subcellular location is the plastid. It is found in the chloroplast thylakoid membrane. It catalyses the reaction reduced [plastocyanin] + hnu + oxidized [2Fe-2S]-[ferredoxin] = oxidized [plastocyanin] + reduced [2Fe-2S]-[ferredoxin]. PsaA and PsaB bind P700, the primary electron donor of photosystem I (PSI), as well as the electron acceptors A0, A1 and FX. PSI is a plastocyanin-ferredoxin oxidoreductase, converting photonic excitation into a charge separation, which transfers an electron from the donor P700 chlorophyll pair to the spectroscopically characterized acceptors A0, A1, FX, FA and FB in turn. Oxidized P700 is reduced on the lumenal side of the thylakoid membrane by plastocyanin. The polypeptide is Photosystem I P700 chlorophyll a apoprotein A2 (Cucumis sativus (Cucumber)).